The primary structure comprises 145 residues: UPF0260 protein VC_1058 (145 aa).

The protein belongs to the UPF0260 family.

The sequence is that of UPF0260 protein VC_1058 from Vibrio cholerae serotype O1 (strain ATCC 39315 / El Tor Inaba N16961).